The following is a 133-amino-acid chain: Phosphoribosyl-AMP cyclohydrolase (133 aa).

Aspartate 77 is a binding site for Mg(2+). Cysteine 78 lines the Zn(2+) pocket. Mg(2+) contacts are provided by aspartate 79 and aspartate 81. The Zn(2+) site is built by cysteine 95 and cysteine 102.

The protein belongs to the PRA-CH family. Homodimer. Mg(2+) is required as a cofactor. Requires Zn(2+) as cofactor.

The protein resides in the cytoplasm. The catalysed reaction is 1-(5-phospho-beta-D-ribosyl)-5'-AMP + H2O = 1-(5-phospho-beta-D-ribosyl)-5-[(5-phospho-beta-D-ribosylamino)methylideneamino]imidazole-4-carboxamide. The protein operates within amino-acid biosynthesis; L-histidine biosynthesis; L-histidine from 5-phospho-alpha-D-ribose 1-diphosphate: step 3/9. Catalyzes the hydrolysis of the adenine ring of phosphoribosyl-AMP. This chain is Phosphoribosyl-AMP cyclohydrolase, found in Azotobacter chroococcum mcd 1.